A 244-amino-acid polypeptide reads, in one-letter code: Putative membrane peptidase YdiL (244 aa).

6 helical membrane-spanning segments follow: residues 7–27, 44–64, 80–100, 127–147, 159–179, and 202–222; these read FIIL…PLLF, AQGL…LLIL, IGLS…SQGI, AVPL…EIIF, TNFF…HADL, and IWVP…MQLE. Residues Glu-143 and His-176 each act as proton donor/acceptor in the active site.

The protein belongs to the peptidase U48 family.

The protein resides in the cell membrane. Functionally, may function as endopeptidase which proteolytically removes the C-terminal three residues of farnesylated peptides containing the CAAX motif where C is cysteine, A is an aliphatic amino acid and X is any amino acid. The polypeptide is Putative membrane peptidase YdiL (ydiL) (Bacillus subtilis (strain 168)).